Here is a 151-residue protein sequence, read N- to C-terminus: Deoxyuridine 5'-triphosphate nucleotidohydrolase (151 aa).

Residues 70–72 (RSG), N83, 87–89 (LID), and M97 each bind substrate.

Belongs to the dUTPase family. Mg(2+) is required as a cofactor.

It carries out the reaction dUTP + H2O = dUMP + diphosphate + H(+). It participates in pyrimidine metabolism; dUMP biosynthesis; dUMP from dCTP (dUTP route): step 2/2. In terms of biological role, this enzyme is involved in nucleotide metabolism: it produces dUMP, the immediate precursor of thymidine nucleotides and it decreases the intracellular concentration of dUTP so that uracil cannot be incorporated into DNA. The protein is Deoxyuridine 5'-triphosphate nucleotidohydrolase of Pseudomonas fluorescens (strain Pf0-1).